Here is a 316-residue protein sequence, read N- to C-terminus: Olfactory receptor 10H3 (316 aa).

Over 1 to 25 (MPGQNYRTISEFILSGFSAFPQQLL) the chain is Extracellular. A helical transmembrane segment spans residues 26–46 (PVLFLLYLLMFLFTLLGNLLI). At 47–54 (MATVWIER) the chain is on the cytoplasmic side. A helical transmembrane segment spans residues 55 to 75 (RLHTPMYLFLCALSISEILFT). The Extracellular segment spans residues 76 to 99 (VAITPRMLADLLFTHRSITFVACA). Residues Cys-98 and Cys-190 are joined by a disulfide bond. Residues 100-120 (IQMFFSFMFGFTHSFLLMVMG) traverse the membrane as a helical segment. The Cytoplasmic portion of the chain corresponds to 121-139 (YDHYVTICHPLHYNMLMSP). The chain crosses the membrane as a helical span at residues 140-160 (RGCAHLVAWTWAGGSVMGMMV). Residues 161-197 (TMMVFHLTFCGSNVIHHFLCHVLSLLKLACGSKTSSV) are Extracellular-facing. A helical transmembrane segment spans residues 198–218 (IMGVMLVCVTALIGCLFLIIL). The Cytoplasmic portion of the chain corresponds to 219–238 (SFVFIVAAILRIPSAEGRHK). A helical membrane pass occupies residues 239–259 (TFSTCVSHLTVVVMHYSFASL). Residues 260-272 (IYLKPKGLHSMYS) are Extracellular-facing. The chain crosses the membrane as a helical span at residues 273–293 (DALMATTYTVFTPFLSPIIFS). At 294–316 (LRNKELKNAINKNFCRRFCPLSS) the chain is on the cytoplasmic side.

This sequence belongs to the G-protein coupled receptor 1 family.

The protein resides in the cell membrane. In terms of biological role, odorant receptor. The polypeptide is Olfactory receptor 10H3 (OR10H3) (Homo sapiens (Human)).